The following is a 698-amino-acid chain: Probable xyloglucan glycosyltransferase 2 (698 aa).

2 consecutive transmembrane segments (helical) span residues 124–144 (GFLALSLLALAVELAAYWNGW) and 190–210 (ILLFVIQSMDRLVLCLGCFWI). The active site involves Asp272. Residues Asp331 and Asp333 each contribute to the substrate site. Asp425 is an active-site residue. The next 4 helical transmembrane spans lie at 503-523 (LILPFYSFTLFCVILPLTMFV), 528-548 (LPVWVICYVPVCMSFLNILPS), 653-668 (LALSLLLLTAATRSLL), and 673-693 (IHFYFLLFQGVSFLFVGLDLI).

This sequence belongs to the glycosyltransferase 2 family. Plant cellulose synthase-like C subfamily.

Its subcellular location is the golgi apparatus membrane. Its function is as follows. Probable beta-1,4-glucan synthase rather involved in the synthesis of the xyloglucan backbone than cellulose. Seems to work simultaneously with xyloglucan 6-xylosyltransferase. Xyloglucan is a noncellulosic polysaccharides of plant cell wall and consists of a glucan backbone substituted by xylose, galactose and fucose. The polypeptide is Probable xyloglucan glycosyltransferase 2 (CSLC2) (Oryza sativa subsp. japonica (Rice)).